The following is a 445-amino-acid chain: Tubulin beta chain (445 aa).

GTP is bound by residues glutamine 11, glutamate 69, serine 138, glycine 142, threonine 143, glycine 144, asparagine 204, and asparagine 226. Glutamate 69 contributes to the Mg(2+) binding site.

Belongs to the tubulin family. As to quaternary structure, dimer of alpha and beta chains. A typical microtubule is a hollow water-filled tube with an outer diameter of 25 nm and an inner diameter of 15 nM. Alpha-beta heterodimers associate head-to-tail to form protofilaments running lengthwise along the microtubule wall with the beta-tubulin subunit facing the microtubule plus end conferring a structural polarity. Microtubules usually have 13 protofilaments but different protofilament numbers can be found in some organisms and specialized cells. Mg(2+) serves as cofactor.

The protein resides in the cytoplasm. Its subcellular location is the cytoskeleton. Its function is as follows. Tubulin is the major constituent of microtubules, a cylinder consisting of laterally associated linear protofilaments composed of alpha- and beta-tubulin heterodimers. Microtubules grow by the addition of GTP-tubulin dimers to the microtubule end, where a stabilizing cap forms. Below the cap, tubulin dimers are in GDP-bound state, owing to GTPase activity of alpha-tubulin. The protein is Tubulin beta chain of Coprinopsis cinerea (strain Okayama-7 / 130 / ATCC MYA-4618 / FGSC 9003) (Inky cap fungus).